Here is a 108-residue protein sequence, read N- to C-terminus: Nucleoid-associated protein mma_2329 (108 aa).

Belongs to the YbaB/EbfC family. Homodimer.

The protein resides in the cytoplasm. It is found in the nucleoid. Binds to DNA and alters its conformation. May be involved in regulation of gene expression, nucleoid organization and DNA protection. In Janthinobacterium sp. (strain Marseille) (Minibacterium massiliensis), this protein is Nucleoid-associated protein mma_2329.